Here is a 325-residue protein sequence, read N- to C-terminus: NADH-quinone oxidoreductase subunit H (325 aa).

9 consecutive transmembrane segments (helical) span residues 11-31 (ILLT…CGAF), 50-69 (SRVG…KMFF), 81-101 (LIFT…FAIV), 114-134 (IGIL…LFAG), 154-174 (LSYE…AGSF), 186-206 (LWNI…GVAV), 237-257 (FFVG…TLFF), 265-285 (LPPF…FILV), and 304-324 (ICLP…LYHA).

It belongs to the complex I subunit 1 family. In terms of assembly, NDH-1 is composed of 13 different subunits. Subunits NuoA, H, J, K, L, M, N constitute the membrane sector of the complex.

It localises to the cell inner membrane. The enzyme catalyses a quinone + NADH + 5 H(+)(in) = a quinol + NAD(+) + 4 H(+)(out). In terms of biological role, NDH-1 shuttles electrons from NADH, via FMN and iron-sulfur (Fe-S) centers, to quinones in the respiratory chain. The immediate electron acceptor for the enzyme in this species is believed to be ubiquinone. Couples the redox reaction to proton translocation (for every two electrons transferred, four hydrogen ions are translocated across the cytoplasmic membrane), and thus conserves the redox energy in a proton gradient. This subunit may bind ubiquinone. The chain is NADH-quinone oxidoreductase subunit H from Edwardsiella ictaluri (strain 93-146).